Consider the following 535-residue polypeptide: Prolyl 4-hydroxylase subunit alpha-2 (535 aa).

Residues 1-21 form the signal peptide; it reads MKLWVSALLMAWFGVLSCVQA. An N-linked (GlcNAc...) asparagine glycan is attached at N115. The stretch at 207 to 240 is one TPR repeat; that stretch reads SQVLDYLSYAVFQLGDLHRALELTRRLLSLDPSH. Residue N264 is glycosylated (N-linked (GlcNAc...) asparagine). Residues 412-520 enclose the Fe2OG dioxygenase domain; it reads TAELLQVANY…KWVSNKWFHE (109 aa). Residues H430 and D432 each contribute to the Fe cation site. At K480 the chain carries N6-succinyllysine. A Fe cation-binding site is contributed by H501. Residue K511 participates in 2-oxoglutarate binding.

The protein belongs to the P4HA family. In terms of assembly, heterotetramer of two alpha-2 chains and two beta chains (P4HB) (the beta chain is the multi-functional PDI), where P4HB plays the role of a structural subunit; this tetramer catalyzes the formation of 4-hydroxyproline in collagen. The cofactor is Fe(2+). L-ascorbate is required as a cofactor. Expressed in the heart, placenta, lung and pancreas.

It localises to the endoplasmic reticulum lumen. It carries out the reaction L-prolyl-[collagen] + 2-oxoglutarate + O2 = trans-4-hydroxy-L-prolyl-[collagen] + succinate + CO2. Its activity is regulated as follows. Inhibited by poly(L-proline) only at very high concentrations. Functionally, catalyzes the post-translational formation of 4-hydroxyproline in -Xaa-Pro-Gly- sequences in collagens and other proteins. This Homo sapiens (Human) protein is Prolyl 4-hydroxylase subunit alpha-2 (P4HA2).